The following is a 261-amino-acid chain: Lys-63-specific deubiquitinase BRCC36 (261 aa).

The region spanning 6–149 (VHIQGDAFLV…YTCFQSVQAQ (144 aa)) is the MPN domain. Residues His-92, His-94, and Asp-105 each contribute to the Zn(2+) site. A JAMM motif motif is present at residues 92–105 (HSHPHITVWPSHVD).

It belongs to the peptidase M67A family. BRCC36 subfamily. As to quaternary structure, component of the BRCA1-A complex, at least composed of brca1, bard1, uimc1/rap80, abraxas1, brcc3/brcc36, babam2 and babam1/nba1. In the BRCA1-A complex, interacts directly with ABRAXAS1 and babam2. Component of the BRISC complex, at least composed of ABRAXAS2, brcc3/brcc36, babam2 and babam1/nba1. Within the complex, interacts directly with abraxas2. Both the BRCA1-A complex and the BRISC complex bind polyubiquitin. Zn(2+) is required as a cofactor.

It is found in the nucleus. It localises to the cytoplasm. The protein localises to the cytoskeleton. The protein resides in the spindle pole. Its function is as follows. Metalloprotease that specifically cleaves 'Lys-63'-linked polyubiquitin chains. Does not have activity toward 'Lys-48'-linked polyubiquitin chains. Component of the BRCA1-A complex, a complex that specifically recognizes 'Lys-63'-linked ubiquitinated histones H2A and H2AX at DNA lesions sites, leading to target the brca1-bard1 heterodimer to sites of DNA damage at double-strand breaks (DSBs). In the BRCA1-A complex, it specifically removes 'Lys-63'-linked ubiquitin on histones H2A and H2AX, antagonizing the rnf8-dependent ubiquitination at double-strand breaks (DSBs). Catalytic subunit of the BRISC complex, a multiprotein complex that specifically cleaves 'Lys-63'-linked ubiquitin in various substrates. Mediates the specific 'Lys-63'-specific deubiquitination associated with the COP9 signalosome complex (CSN), via the interaction of the BRISC complex with the CSN complex. The BRISC complex is required for normal mitotic spindle assembly and microtubule attachment to kinetochores via its role in deubiquitinating numa1. Plays a role in interferon signaling via its role in the deubiquitination of the interferon receptor ifnar1; deubiquitination increases ifnar1 activity by enhancing its stability and cell surface expression. Acts as a regulator of the NLRP3 inflammasome by mediating deubiquitination of nlrp3. Down-regulates the response to bacterial lipopolysaccharide (LPS) via its role in ifnar1 deubiquitination. The chain is Lys-63-specific deubiquitinase BRCC36 (brcc3) from Xenopus laevis (African clawed frog).